The primary structure comprises 652 residues: p-hydroxybenzoic acid efflux pump subunit AaeB (652 aa).

A run of 11 helical transmembrane segments spans residues 8–28 (FPIK…HFNL), 34–54 (AVMT…GDPF), 64–84 (LRII…IATI), 88–108 (ALMM…SSLI), 118–138 (LAGY…SVLL), 149–169 (EIII…PRSV), 367–387 (LFWL…LAVI), 404–424 (FLYG…VIMP), 429–449 (SMLL…ILIQ), 453–473 (IGTL…NPMT), and 480–500 (LDNA…ILLI).

It belongs to the aromatic acid exporter ArAE (TC 2.A.85) family.

It is found in the cell inner membrane. Its function is as follows. Forms an efflux pump with AaeA. Could function as a metabolic relief valve, allowing to eliminate certain compounds when they accumulate to high levels in the cell. This is p-hydroxybenzoic acid efflux pump subunit AaeB from Erwinia billingiae (strain Eb661).